We begin with the raw amino-acid sequence, 171 residues long: Putative adenylate kinase (171 aa).

5 residues coordinate ATP: G9, G11, K12, T13, and T14. An NMP region spans residues 28-51 (SLGELIRQKGFVLGRDPIRGYLEA). The tract at residues 99–109 (GRGYPEGKVLE) is LID. R100 is a binding site for ATP.

It belongs to the adenylate kinase family. AK6 subfamily. Interacts with uS11. Not a structural component of 40S pre-ribosomes, but transiently interacts with them by binding to uS11.

It catalyses the reaction AMP + ATP = 2 ADP. The enzyme catalyses ATP + H2O = ADP + phosphate + H(+). Functionally, broad-specificity nucleoside monophosphate (NMP) kinase that catalyzes the reversible transfer of the terminal phosphate group between nucleoside triphosphates and monophosphates. Also has ATPase activity. Involved in the late maturation steps of the 30S ribosomal particles, specifically 16S rRNA maturation. While NMP activity is not required for ribosome maturation, ATPase activity is. Associates transiently with small ribosomal subunit protein uS11. ATP hydrolysis breaks the interaction with uS11. May temporarily remove uS11 from the ribosome to enable a conformational change of the ribosomal RNA that is needed for the final maturation step of the small ribosomal subunit. The sequence is that of Putative adenylate kinase from Methanothermobacter thermautotrophicus (strain ATCC 29096 / DSM 1053 / JCM 10044 / NBRC 100330 / Delta H) (Methanobacterium thermoautotrophicum).